The following is a 151-amino-acid chain: FAD synthase (151 aa).

Residues 12 to 13 (TF), 17 to 20 (HPGH), Asp97, and Tyr125 each bind ATP.

Belongs to the archaeal FAD synthase family. Homodimer. A divalent metal cation is required as a cofactor.

It catalyses the reaction FMN + ATP + H(+) = FAD + diphosphate. It participates in cofactor biosynthesis; FAD biosynthesis; FAD from FMN: step 1/1. In terms of biological role, catalyzes the transfer of the AMP portion of ATP to flavin mononucleotide (FMN) to produce flavin adenine dinucleotide (FAD) coenzyme. The sequence is that of FAD synthase from Methanocaldococcus sp. (strain FS406-22).